The sequence spans 1186 residues: ATP-dependent helicase/deoxyribonuclease subunit B (1186 aa).

A UvrD-like helicase ATP-binding domain is found at 1–308 (MSVKFLLGRA…AHLEKEWGKN (308 aa)). Position 8–15 (8–15 (GRAGSGKT)) interacts with ATP. The 333-residue stretch at 288 to 620 (SLPRFKDNPA…LVGTADRSRY (333 aa)) folds into the UvrD-like helicase C-terminal domain. C822, C1144, C1147, and C1153 together coordinate [4Fe-4S] cluster.

It belongs to the helicase family. AddB/RexB type 1 subfamily. Heterodimer of AddA and AddB. Mg(2+) serves as cofactor. It depends on [4Fe-4S] cluster as a cofactor.

The heterodimer acts as both an ATP-dependent DNA helicase and an ATP-dependent, dual-direction single-stranded exonuclease. Recognizes the chi site generating a DNA molecule suitable for the initiation of homologous recombination. The AddB subunit has 5' -&gt; 3' nuclease activity but not helicase activity. The protein is ATP-dependent helicase/deoxyribonuclease subunit B of Natranaerobius thermophilus (strain ATCC BAA-1301 / DSM 18059 / JW/NM-WN-LF).